The primary structure comprises 156 residues: Phospholipase A2 A2-hormotoxin-Apt1a (156 aa).

An N-terminal signal peptide occupies residues methionine 1–alanine 19. Residues aspartate 20–alanine 35 constitute a propeptide that is removed on maturation. Cystine bridges form between cysteine 62–cysteine 156, cysteine 64–cysteine 80, cysteine 79–cysteine 138, cysteine 86–cysteine 131, and cysteine 115–cysteine 129. The Ca(2+) site is built by glycine 65 and glycine 67. The active site involves histidine 83. Aspartate 84 contacts Ca(2+). The active site involves aspartate 132.

The protein belongs to the phospholipase A2 family. Requires Ca(2+) as cofactor.

It is found in the secreted. Its subcellular location is the nematocyst. The catalysed reaction is a 1,2-diacyl-sn-glycero-3-phosphocholine + H2O = a 1-acyl-sn-glycero-3-phosphocholine + a fatty acid + H(+). Sea anemone phospholipase A2 (PLA2) that may have a role both in defense and in digestion, since its expression and enzymatic activity were found both in the acontia (defensive organs) and tentacles. PLA2 catalyzes the calcium-dependent hydrolysis of the 2-acyl groups in 3-sn-phosphoglycerides. The sequence is that of Phospholipase A2 A2-hormotoxin-Apt1a from Adamsia palliata (Cloak anemone).